The following is a 151-amino-acid chain: Arginine repressor (151 aa).

The protein belongs to the ArgR family.

The protein resides in the cytoplasm. It participates in amino-acid biosynthesis; L-arginine biosynthesis [regulation]. In terms of biological role, regulates arginine biosynthesis genes. This is Arginine repressor from Moorella thermoacetica (strain ATCC 39073 / JCM 9320).